The chain runs to 129 residues: Small ribosomal subunit protein uS11 (129 aa).

It belongs to the universal ribosomal protein uS11 family. Part of the 30S ribosomal subunit. Interacts with proteins S7 and S18. Binds to IF-3.

Located on the platform of the 30S subunit, it bridges several disparate RNA helices of the 16S rRNA. Forms part of the Shine-Dalgarno cleft in the 70S ribosome. This chain is Small ribosomal subunit protein uS11, found in Macrococcus caseolyticus (strain JCSC5402) (Macrococcoides caseolyticum).